Reading from the N-terminus, the 468-residue chain is Protein translocase subunit SecY (468 aa).

Residues Met1–Pro20 are Cytoplasmic-facing. The chain crosses the membrane as a helical span at residues Lys21–Pro47. Topologically, residues Val48–Tyr58 are extracellular. Residues Phe59 to Leu66 constitute an intramembrane region (helical). Residues Phe59–Ile87 form a discontinuously helical membrane-spanning segment. Residues Ala67–Ile78 lie within the membrane without spanning it. The segment at residues Gly79–Ile87 is an intramembrane region (helical). Topologically, residues Leu88–Arg108 are cytoplasmic. Residues Phe109–Gly133 traverse the membrane as a helical segment. Over Ala134 to Tyr144 the chain is Extracellular. Residues Thr145 to Ser169 traverse the membrane as a helical segment. Residues Lys170 to Ser175 are Cytoplasmic-facing. The chain crosses the membrane as a helical span at residues Gly176 to Leu194. Topologically, residues Asn195–Pro239 are extracellular. A helical transmembrane segment spans residues Asp240–Arg261. At Val262–Ser285 the chain is on the cytoplasmic side. A helical membrane pass occupies residues Asn286–Asp307. Topologically, residues Arg308 to Val346 are extracellular. Residues Arg347–Trp366 traverse the membrane as a helical segment. At Val367–Val409 the chain is on the cytoplasmic side. Residues Thr410 to Gly428 form a helical membrane-spanning segment. The Extracellular segment spans residues Ala429–Gly431. A helical membrane pass occupies residues Thr432–Phe446. At Tyr447–Gly468 the chain is on the cytoplasmic side.

It belongs to the SecY/SEC61-alpha family. In terms of assembly, component of the Sec protein translocase complex. Heterotrimer consisting of alpha (SecY), beta (SecG) and gamma (SecE) subunits. The heterotrimers can form oligomers, although 1 heterotrimer is thought to be able to translocate proteins. Interacts with the ribosome. May interact with SecDF, and other proteins may be involved.

Its subcellular location is the cell membrane. Functionally, the central subunit of the protein translocation channel SecYEG. Consists of two halves formed by TMs 1-5 and 6-10. These two domains form a lateral gate at the front which open onto the bilayer between TMs 2 and 7, and are clamped together by SecE at the back. The channel is closed by both a pore ring composed of hydrophobic SecY resides and a short helix (helix 2A) on the extracellular side of the membrane which forms a plug. The plug probably moves laterally to allow the channel to open. The ring and the pore may move independently. The chain is Protein translocase subunit SecY from Pyrococcus horikoshii (strain ATCC 700860 / DSM 12428 / JCM 9974 / NBRC 100139 / OT-3).